We begin with the raw amino-acid sequence, 804 residues long: Probable protein phosphatase 2C 18 (804 aa).

A helical membrane pass occupies residues 19-39; it reads DASGPVLFWCVLIIFAVPDAI. Residues 129 to 434 form the PPM-type phosphatase domain; the sequence is KYIVSSMQGL…ENTTVILVQF (306 aa). Mn(2+)-binding residues include aspartate 165, glycine 166, glutamine 384, and glutamate 425. Disordered regions lie at residues 460-509, 564-599, 623-653, and 675-804; these read STSA…GGSA, DEVE…LNAS, PLQG…DDDV, and VDST…EGSP. A compositionally biased stretch (low complexity) spans 468-499; it reads GSDSDTSATSDEGVDDTATAGTTTTGYEAGSS. The segment covering 628-637 has biased composition (polar residues); that stretch reads DVSSTSTNPN. A compositionally biased stretch (low complexity) spans 638–647; that stretch reads TATDTGSGSR. Residues 713–734 are compositionally biased toward polar residues; it reads LVNNDTTVADNNASGVADSTTV. Low complexity predominate over residues 776–789; the sequence is DATATATASASAAV. Over residues 790 to 804 the composition is skewed to acidic residues; sequence ADDEGTAPDDSEGSP.

The protein belongs to the PP2C family. Mg(2+) serves as cofactor. It depends on Mn(2+) as a cofactor.

It localises to the membrane. The enzyme catalyses O-phospho-L-seryl-[protein] + H2O = L-seryl-[protein] + phosphate. The catalysed reaction is O-phospho-L-threonyl-[protein] + H2O = L-threonyl-[protein] + phosphate. This is Probable protein phosphatase 2C 18 from Oryza sativa subsp. japonica (Rice).